A 136-amino-acid polypeptide reads, in one-letter code: Histone H3.2 (136 aa).

A disordered region spans residues 1–43 (MARTKQTARKSTGGKAPRKQLATKAARKSAPATGGVKKPHRFR). Lys5 bears the N6-methylated lysine mark. An N6-acetyllysine; alternate modification is found at Lys10. At Lys10 the chain carries N6-methylated lysine; alternate. Residue Ser11 is modified to Phosphoserine. Residue Thr12 is modified to Phosphothreonine. Lys15 is modified (N6-acetyllysine). N6-acetyllysine; alternate occurs at positions 19 and 24. N6-methylated lysine; alternate occurs at positions 19 and 24. Lys28 is subject to N6-methylated lysine. A Phosphoserine modification is found at Ser29. The residue at position 37 (Lys37) is an N6-methylated lysine.

Belongs to the histone H3 family. As to quaternary structure, the nucleosome is a histone octamer containing two molecules each of H2A, H2B, H3 and H4 assembled in one H3-H4 heterotetramer and two H2A-H2B heterodimers. The octamer wraps approximately 147 bp of DNA. Acetylation is generally linked to gene activation. Can be acetylated to form H3K9ac, H3K14ac, H3K18ac and H3K23ac. H3K9ac could compete with H3K9me and prevent gene silencing. H3K9ac is restricted to euchromatin. Post-translationally, methylated to form mainly H3K4me, H3K9me, H3K18me, H3K23me, H3K27me and H3K36me. H3K4me1/2/3, H3K9me3, H3K27me3 and H3K36me1/2/3 are typical marks for euchromatin, whereas heterochromatic chromocenters are enriched in H3K9me1/2 and H3K27me1/2. H2BK143ub1 is probably prerequisite for H3K4me. In terms of processing, can be phosphorylated to form H3S10ph, H3T11ph and H3S28ph.

It localises to the nucleus. Its subcellular location is the chromosome. Its function is as follows. Core component of nucleosome. Nucleosomes wrap and compact DNA into chromatin, limiting DNA accessibility to the cellular machineries which require DNA as a template. Histones thereby play a central role in transcription regulation, DNA repair, DNA replication and chromosomal stability. DNA accessibility is regulated via a complex set of post-translational modifications of histones, also called histone code, and nucleosome remodeling. This chain is Histone H3.2, found in Triticum aestivum (Wheat).